We begin with the raw amino-acid sequence, 340 residues long: Protein-glutamate methylesterase/protein-glutamine glutaminase 1 (340 aa).

The 118-residue stretch at 5 to 122 (KLFIVDDSAL…KVVSELKEKI (118 aa)) folds into the Response regulatory domain. D56 bears the 4-aspartylphosphate mark. The 193-residue stretch at 148-340 (GKNGRQLVVI…AIAEEIAANI (193 aa)) folds into the CheB-type methylesterase domain. Active-site residues include S160, H187, and D285.

Belongs to the CheB family. In terms of processing, phosphorylated by CheA. Phosphorylation of the N-terminal regulatory domain activates the methylesterase activity.

The protein resides in the cytoplasm. It carries out the reaction [protein]-L-glutamate 5-O-methyl ester + H2O = L-glutamyl-[protein] + methanol + H(+). The catalysed reaction is L-glutaminyl-[protein] + H2O = L-glutamyl-[protein] + NH4(+). Functionally, involved in chemotaxis. Part of a chemotaxis signal transduction system that modulates chemotaxis in response to various stimuli. Catalyzes the demethylation of specific methylglutamate residues introduced into the chemoreceptors (methyl-accepting chemotaxis proteins or MCP) by CheR. Also mediates the irreversible deamidation of specific glutamine residues to glutamic acid. This Carboxydothermus hydrogenoformans (strain ATCC BAA-161 / DSM 6008 / Z-2901) protein is Protein-glutamate methylesterase/protein-glutamine glutaminase 1.